The chain runs to 407 residues: S-adenosylmethionine synthase (407 aa).

His19 is an ATP binding site. Asp21 lines the Mg(2+) pocket. Glu47 contacts K(+). The L-methionine site is built by Glu60 and Gln103. The interval 103-113 is flexible loop; that stretch reads QSQEIADGVDN. Residues 107–134 form a disordered region; that stretch reads IADGVDNSDEARTNGDVEEDDRAGAGDQ. Residues 178-180, Asp258, 264-265, Ala281, and Lys285 contribute to the ATP site; these read DGK and RK. Residue Asp258 participates in L-methionine binding. Lys289 is a binding site for L-methionine.

It belongs to the AdoMet synthase family. As to quaternary structure, homotetramer; dimer of dimers. Mg(2+) is required as a cofactor. K(+) serves as cofactor.

It is found in the cytoplasm. It carries out the reaction L-methionine + ATP + H2O = S-adenosyl-L-methionine + phosphate + diphosphate. It functions in the pathway amino-acid biosynthesis; S-adenosyl-L-methionine biosynthesis; S-adenosyl-L-methionine from L-methionine: step 1/1. Its function is as follows. Catalyzes the formation of S-adenosylmethionine (AdoMet) from methionine and ATP. The overall synthetic reaction is composed of two sequential steps, AdoMet formation and the subsequent tripolyphosphate hydrolysis which occurs prior to release of AdoMet from the enzyme. This is S-adenosylmethionine synthase from Corynebacterium glutamicum (strain ATCC 13032 / DSM 20300 / JCM 1318 / BCRC 11384 / CCUG 27702 / LMG 3730 / NBRC 12168 / NCIMB 10025 / NRRL B-2784 / 534).